The primary structure comprises 208 residues: Outer-membrane lipoprotein carrier protein (208 aa).

The first 25 residues, 1–25 (MKKRFSAKLFSALVLSISFFSAANA), serve as a signal peptide directing secretion.

Belongs to the LolA family. Monomer.

It is found in the periplasm. Functionally, participates in the translocation of lipoproteins from the inner membrane to the outer membrane. Only forms a complex with a lipoprotein if the residue after the N-terminal Cys is not an aspartate (The Asp acts as a targeting signal to indicate that the lipoprotein should stay in the inner membrane). In Vibrio parahaemolyticus serotype O3:K6 (strain RIMD 2210633), this protein is Outer-membrane lipoprotein carrier protein.